The primary structure comprises 529 residues: Bifunctional purine biosynthesis protein PurH (529 aa).

Residues 1–148 (MQQRRPIRRA…KNHKDVAIVV (148 aa)) enclose the MGS-like domain.

The protein belongs to the PurH family.

The enzyme catalyses (6R)-10-formyltetrahydrofolate + 5-amino-1-(5-phospho-beta-D-ribosyl)imidazole-4-carboxamide = 5-formamido-1-(5-phospho-D-ribosyl)imidazole-4-carboxamide + (6S)-5,6,7,8-tetrahydrofolate. It catalyses the reaction IMP + H2O = 5-formamido-1-(5-phospho-D-ribosyl)imidazole-4-carboxamide. Its pathway is purine metabolism; IMP biosynthesis via de novo pathway; 5-formamido-1-(5-phospho-D-ribosyl)imidazole-4-carboxamide from 5-amino-1-(5-phospho-D-ribosyl)imidazole-4-carboxamide (10-formyl THF route): step 1/1. It functions in the pathway purine metabolism; IMP biosynthesis via de novo pathway; IMP from 5-formamido-1-(5-phospho-D-ribosyl)imidazole-4-carboxamide: step 1/1. The protein is Bifunctional purine biosynthesis protein PurH of Yersinia enterocolitica serotype O:8 / biotype 1B (strain NCTC 13174 / 8081).